The sequence spans 162 residues: Caveolin-2 (162 aa).

Over Met1 to Lys86 the chain is Cytoplasmic. Tyr19 carries the phosphotyrosine; by SRC modification. Residues Ser20 and Ser23 each carry the phosphoserine modification. A Phosphotyrosine; by SRC modification is found at Tyr27. Ser36 is modified (phosphoserine). Positions Phe87–Leu107 form an intramembrane region, helical. Topologically, residues Ser108–Asp162 are cytoplasmic.

This sequence belongs to the caveolin family. Monomer or homodimer. Interacts with CAV1; the interaction forms a stable heterooligomeric complex that is required for targeting to lipid rafts and for caveolae formation. Tyrosine phosphorylated forms do not form heterooligomers with the Tyr-19-phosphorylated form existing as a monomer or dimer, and the Tyr-27-form as a monomer only. Interacts (tyrosine phosphorylated form) with the SH2 domain-containing proteins, RASA1, NCK1 and SRC. Interacts (tyrosine phosphorylated form) with INSR, the interaction (Tyr-27-phosphorylated form) is increased on insulin stimulation. Interacts (Tyr-19 phosphorylated form) with MAPK1 (phosphorylated form); the interaction, promoted by insulin, leads to nuclear location and MAPK1 activation. Interacts with STAT3; the interaction is increased on insulin-induced tyrosine phosphorylation leading to STAT activation. In terms of processing, phosphorylated on serine and tyrosine residues. CAV1 promotes phosphorylation on Ser-23 which then targets the complex to the plasma membrane, lipid rafts and caveolae. Phosphorylation on Ser-36 appears to modulate mitosis in endothelial cells. Phosphorylation on both Tyr-19 and Tyr-27 is required for insulin-induced 'Ser-727' phosphorylation of STAT3 and its activation. Phosphorylation on Tyr-19 is required for insulin-induced phosphorylation of MAPK1 and DNA binding of STAT3. Tyrosine phosphorylation is induced by both EGF and insulin (By. similarity).

The protein localises to the nucleus. It localises to the cytoplasm. Its subcellular location is the golgi apparatus membrane. The protein resides in the cell membrane. It is found in the membrane. The protein localises to the caveola. Functionally, may act as a scaffolding protein within caveolar membranes. Interacts directly with G-protein alpha subunits and can functionally regulate their activity. Acts as an accessory protein in conjunction with CAV1 in targeting to lipid rafts and driving caveolae formation. The Ser-36 phosphorylated form has a role in modulating mitosis in endothelial cells. Positive regulator of cellular mitogenesis of the MAPK signaling pathway. Required for the insulin-stimulated nuclear translocation and activation of MAPK1 and STAT3, and the subsequent regulation of cell cycle progression. The chain is Caveolin-2 (CAV2) from Chlorocebus aethiops (Green monkey).